A 188-amino-acid polypeptide reads, in one-letter code: Peptidyl-tRNA hydrolase (188 aa).

Tyr14 contacts tRNA. His19 acts as the Proton acceptor in catalysis. TRNA contacts are provided by Tyr64, Asn66, and Asn113.

It belongs to the PTH family. As to quaternary structure, monomer.

It localises to the cytoplasm. It catalyses the reaction an N-acyl-L-alpha-aminoacyl-tRNA + H2O = an N-acyl-L-amino acid + a tRNA + H(+). Hydrolyzes ribosome-free peptidyl-tRNAs (with 1 or more amino acids incorporated), which drop off the ribosome during protein synthesis, or as a result of ribosome stalling. Functionally, catalyzes the release of premature peptidyl moieties from peptidyl-tRNA molecules trapped in stalled 50S ribosomal subunits, and thus maintains levels of free tRNAs and 50S ribosomes. The polypeptide is Peptidyl-tRNA hydrolase (Chloroflexus aggregans (strain MD-66 / DSM 9485)).